Reading from the N-terminus, the 501-residue chain is Cytochrome P450 76M5 (501 aa).

Residues 5–25 traverse the membrane as a helical segment; it reads ELWVLAAALAVSLLYYLAALM. Position 443 (cysteine 443) interacts with heme.

This sequence belongs to the cytochrome P450 family. Heme serves as cofactor.

The protein localises to the membrane. It carries out the reaction ent-sandaracopimaradien-3beta-ol + reduced [NADPH--hemoprotein reductase] + O2 = oryzalexin E + oxidized [NADPH--hemoprotein reductase] + H2O + H(+). Its function is as follows. Enzyme of the diterpenoid metabolism involved in the biosynthesis of the oryzalexin class of phytoalexins. Hydroxylates ent-sandaracopimaradien. The protein is Cytochrome P450 76M5 of Oryza sativa subsp. japonica (Rice).